A 1172-amino-acid polypeptide reads, in one-letter code: Short transient receptor potential channel 2 (1172 aa).

The span at 1 to 10 shows a compositional bias: basic and acidic residues; it reads MLMSRTDSKS. Disordered stretches follow at residues 1–22, 69–98, 140–227, and 249–271; these read MLMS…MFKD, VVDP…WLTN, SAAR…GGVQ, and ATCG…SESV. At 1-659 the chain is on the cytoplasmic side; that stretch reads MLMSRTDSKS…PKSQLGRLLK (659 aa). Residues 75–87 are compositionally biased toward polar residues; it reads PGSSGLNQNSTDV. Over residues 166 to 177 the composition is skewed to basic and acidic residues; it reads ESAEPRAEEPNR. The segment covering 195-204 has biased composition (polar residues); it reads SLSNSSSQPN. Basic residues predominate over residues 206–218; sequence RTGRTRQRQHRPQ. The span at 261–270 shows a compositional bias: low complexity; it reads SPASLSSSES. ANK repeat units follow at residues 301–330, 377–406, and 430–459; these read KFPP…DASG, QIHE…REKG, and PGVT…TIAR. A helical membrane pass occupies residues 660 to 680; that stretch reads IPVLKFLLHSASYLWFLIFLL. The Extracellular segment spans residues 681–702; it reads GESLVMETQLSTFKGRSQSVWE. Residues 703–723 traverse the membrane as a helical segment; sequence TSLHMIWVTGFLWFECKEVWI. The Cytoplasmic portion of the chain corresponds to 724–738; that stretch reads EGLRSYLLDWWNFLD. A helical transmembrane segment spans residues 739 to 759; it reads VVILSLYLASFALRLLLAGLA. At 760 to 789 the chain is on the extracellular side; the sequence is YMHCRDASDSTTCRYFTTAERSEWRTEDPQ. The chain crosses the membrane as a helical span at residues 790–810; it reads FLAEVLFAVTSMLSFTRLAYI. At 811–833 the chain is on the cytoplasmic side; it reads LPAHESLGTLQISIGKMIDDMIR. The helical transmembrane segment at 834–854 threads the bilayer; it reads FMFILMIILTAFLCGLNNIYV. The Extracellular segment spans residues 855–899; sequence PYQESEKLGNFNETFQFLFWTMFGMEEHTVVDMPQFLVPEFVGRA. The helical transmembrane segment at 900–920 threads the bilayer; the sequence is MYGIFTIVMVIVLLNMLIAMI. Topologically, residues 921–1172 are cytoplasmic; the sequence is TNSFQKIEDD…EGDLETKGES (252 aa). Positions 1118 to 1172 are disordered; that stretch reads VSLGDGLDGTGEAGAPAPGEPGSSSSAHVLVHREQEAEGSGDLLLEGDLETKGES. A compositionally biased stretch (low complexity) spans 1130–1144; the sequence is AGAPAPGEPGSSSSA.

This sequence belongs to the transient receptor (TC 1.A.4) family. STrpC subfamily. TRPC2 sub-subfamily. Isoform 3 is ubiquitously expressed at low levels. Isoform 4 is expressed exclusively in vomeronasal organ.

It is found in the membrane. Thought to form a receptor-activated non-selective calcium permeant cation channel. Probably is operated by a phosphatidylinositol second messenger system activated by receptor tyrosine kinases or G-protein coupled receptors. May also be activated by intracellular calcium store depletion. Plays a role in mediating responsivity to pheromones that elicit aggressive and mating behaviors. Required for response to the Esp1 pheromone which enhances female sexual receptive behavior and to the Esp22 pheromone which inhibits adult male mating behavior. The chain is Short transient receptor potential channel 2 (Trpc2) from Mus musculus (Mouse).